The chain runs to 1624 residues: Putative serine/threonine-protein kinase/receptor R831 (1624 aa).

The signal sequence occupies residues 1 to 25 (MHSVYTKYTIILILLVIYQGLPTNT). 13 N-linked (GlcNAc...) asparagine; by host glycosylation sites follow: Asn152, Asn169, Asn200, Asn205, Asn225, Asn240, Asn245, Asn292, Asn364, Asn479, Asn541, Asn720, and Asn737. A helical transmembrane segment spans residues 747–767 (VIPIACIFGLLLLTLLIVIIF). The Protein kinase 1 domain occupies 786–1049 (LEIGETLGTG…EIMTRLSNIL (264 aa)). Residues 792-800 (LGTGGYGEV) and Lys813 contribute to the ATP site. Residue Asp908 is the Proton acceptor of the active site. Low complexity predominate over residues 1054–1093 (NMTSGTSSSSLSSGGIGKSITDSKSSNSRSSVESSNTSNT). The segment at 1054 to 1101 (NMTSGTSSSSLSSGGIGKSITDSKSSNSRSSVESSNTSNTFRGIDRHN) is disordered. The Guanylate cyclase domain occupies 1109 to 1252 (TVAFIDIISA…STVNITGKIT (144 aa)). One can recognise a Protein kinase 2 domain in the interval 1364 to 1615 (ISIGKQIGLG…MTEVVQQLML (252 aa)). Residues 1370-1378 (IGLGSYGIV) and Lys1391 contribute to the ATP site. The active-site Proton acceptor is Asp1487.

The protein resides in the membrane. It carries out the reaction L-seryl-[protein] + ATP = O-phospho-L-seryl-[protein] + ADP + H(+). The catalysed reaction is L-threonyl-[protein] + ATP = O-phospho-L-threonyl-[protein] + ADP + H(+). The sequence is that of Putative serine/threonine-protein kinase/receptor R831 from Acanthamoeba polyphaga (Amoeba).